Consider the following 250-residue polypeptide: Cell division protein ZapD (250 aa).

It belongs to the ZapD family. In terms of assembly, interacts with FtsZ.

The protein localises to the cytoplasm. Cell division factor that enhances FtsZ-ring assembly. Directly interacts with FtsZ and promotes bundling of FtsZ protofilaments, with a reduction in FtsZ GTPase activity. The polypeptide is Cell division protein ZapD (Yersinia pseudotuberculosis serotype O:1b (strain IP 31758)).